A 227-amino-acid polypeptide reads, in one-letter code: MADS-box transcription factor 25 (227 aa).

Positions 1-61 (MGRGKIAIKR…GRLYDFSSSS (61 aa)) constitute an MADS-box domain. The 91-residue stretch at 86-176 (AKFWQREVTT…RKKFNIAHQR (91 aa)) folds into the K-box domain. Residues 183-227 (KLNSGESTSSEQVTRSSKDPGESSTPRDSRVCIDLELSQKEVEDE) are disordered. Positions 186 to 197 (SGESTSSEQVTR) are enriched in polar residues. Over residues 198–227 (SSKDPGESSTPRDSRVCIDLELSQKEVEDE) the composition is skewed to basic and acidic residues.

In terms of tissue distribution, expressed in seedling roots.

The protein resides in the nucleus. Probable transcription factor. The protein is MADS-box transcription factor 25 (MADS25) of Oryza sativa subsp. japonica (Rice).